We begin with the raw amino-acid sequence, 115 residues long: Probable non-functional T cell receptor beta variable 7-1 (115 aa).

Positions 1–21 (MGTRLLCWAAICLLGADHTGA) are cleaved as a signal peptide. Residues 22 to 115 (GVSQSLRHKV…LAVYLCASSS (94 aa)) enclose the Ig-like domain.

In terms of assembly, most probably, the alpha-beta TR is not assembled due to incorrect folding of the beta chain. Alpha-beta TR is a heterodimer composed of an alpha and beta chain; disulfide-linked. The alpha-beta TR is associated with the transmembrane signaling CD3 coreceptor proteins to form the TR-CD3 (TcR or TCR). The assembly of alpha-beta TR heterodimers with CD3 occurs in the endoplasmic reticulum where a single alpha-beta TR heterodimer associates with one CD3D-CD3E heterodimer, one CD3G-CD3E heterodimer and one CD247 homodimer forming a stable octameric structure. CD3D-CD3E and CD3G-CD3E heterodimers preferentially associate with TR alpha and TR beta chains, respectively. The association of the CD247 homodimer is the last step of TcR assembly in the endoplasmic reticulum and is required for transport to the cell surface.

The protein resides in the cell membrane. Functionally, probable non-functional open reading frame (ORF) of V region of the variable domain of T cell receptor (TR) beta chain. Non-functional ORF generally cannot participate in the synthesis of a productive T cell receptor (TR) chain due to altered V-(D)-J or switch recombination and/or splicing site (at mRNA level) and/or conserved amino acid change (protein level). Alpha-beta T cell receptors are antigen specific receptors which are essential to the immune response and are present on the cell surface of T lymphocytes. Recognize peptide-major histocompatibility (MH) (pMH) complexes that are displayed by antigen presenting cells (APC), a prerequisite for efficient T cell adaptive immunity against pathogens. Binding of alpha-beta TR to pMH complex initiates TR-CD3 clustering on the cell surface and intracellular activation of LCK that phosphorylates the ITAM motifs of CD3G, CD3D, CD3E and CD247 enabling the recruitment of ZAP70. In turn ZAP70 phosphorylates LAT, which recruits numerous signaling molecules to form the LAT signalosome. The LAT signalosome propagates signal branching to three major signaling pathways, the calcium, the mitogen-activated protein kinase (MAPK) kinase and the nuclear factor NF-kappa-B (NF-kB) pathways, leading to the mobilization of transcription factors that are critical for gene expression and essential for T cell growth and differentiation. The T cell repertoire is generated in the thymus, by V-(D)-J rearrangement. This repertoire is then shaped by intrathymic selection events to generate a peripheral T cell pool of self-MH restricted, non-autoaggressive T cells. Post-thymic interaction of alpha-beta TR with the pMH complexes shapes TR structural and functional avidity. The polypeptide is Probable non-functional T cell receptor beta variable 7-1 (Homo sapiens (Human)).